Reading from the N-terminus, the 250-residue chain is Pyrroloquinoline-quinone synthase (250 aa).

The protein belongs to the PqqC family.

The catalysed reaction is 6-(2-amino-2-carboxyethyl)-7,8-dioxo-1,2,3,4,7,8-hexahydroquinoline-2,4-dicarboxylate + 3 O2 = pyrroloquinoline quinone + 2 H2O2 + 2 H2O + H(+). It functions in the pathway cofactor biosynthesis; pyrroloquinoline quinone biosynthesis. In terms of biological role, ring cyclization and eight-electron oxidation of 3a-(2-amino-2-carboxyethyl)-4,5-dioxo-4,5,6,7,8,9-hexahydroquinoline-7,9-dicarboxylic-acid to PQQ. In Xanthomonas euvesicatoria pv. vesicatoria (strain 85-10) (Xanthomonas campestris pv. vesicatoria), this protein is Pyrroloquinoline-quinone synthase.